Here is a 273-residue protein sequence, read N- to C-terminus: Undecaprenyl-diphosphatase (273 aa).

Transmembrane regions (helical) follow at residues 4 to 24 (LILLKALLLGIVEGLTEFLPI), 43 to 63 (KAKVFTVAIQLGAILAVCWEY), 82 to 102 (FVINLFIAFLPAAILGLLFIK), 108 to 128 (LFHPMPVAIALVTGGILILWA), 183 to 203 (AAEFSFFLAIPVMFAATFYDV), 217 to 237 (MFATGSVAAFISALIAIRGFI), and 248 to 268 (FAWYRIGFGLIVLLTAYSGLV).

The protein belongs to the UppP family.

The protein localises to the cell inner membrane. It carries out the reaction di-trans,octa-cis-undecaprenyl diphosphate + H2O = di-trans,octa-cis-undecaprenyl phosphate + phosphate + H(+). In terms of biological role, catalyzes the dephosphorylation of undecaprenyl diphosphate (UPP). Confers resistance to bacitracin. The polypeptide is Undecaprenyl-diphosphatase (Nitrosomonas europaea (strain ATCC 19718 / CIP 103999 / KCTC 2705 / NBRC 14298)).